The chain runs to 1030 residues: MGPRCTLHPLSLLVQVTALAAALAQGRLPAFLPCELQPHGLVNCNWLFLKSVPHFSAAAPRANVTSLSLLSNRIHHLHDSDFVHLSSLRTLNLKWNCPPAGLSPMHFPCHMTIEPNTFLAVPTLEELNLSYNSITTVPALPDSLVSLSLSRTNILVLDPTHLTGLHALRYLYMDGNCYYKNPCQGALEVVPGALLGLGNLTHLSLKYNNLTEVPRSLPPSLETLLLSYNHIVTLTPEDLANLTALRVLDVGGNCRRCDHARNPCRECPKDHPKLHSDTFSHLSRLEGLVLKDSSLYNLDTRWFRGLDRLQVLDLSENFLYDCITKTTAFQGLARLRSLNLSFNYHKKVSFAHLHLAPSFGHLRSLKELDMHGIFFRSLSETTLQPLVQLPMLQTLRLQMNFINQAQLSIFGAFPGLLYVDLSDNRISGAARPVAITREVDGRERVWLPSRNLAPRPLDTLRSEDFMPNCKAFSFTLDLSRNNLVTIQSEMFARLSRLECLRLSHNSISQAVNGSQFVPLTSLRVLDLSHNKLDLYHGRSFTELPRLEALDLSYNSQPFTMQGVGHNLSFVAQLPALRYLSLAHNDIHSRVSQQLCSASLCALDFSGNDLSRMWAEGDLYLRFFQGLRSLVWLDLSQNHLHTLLPRALDNLPKSLKHLHLRDNNLAFFNWSSLTLLPKLETLDLAGNQLKALSNGSLPSGTQLRRLDLSGNSIGFVNPGFFALAKQLEELNLSANALKTVEPSWFGSMVGNLKVLDVSANPLHCACGATFVGFLLEVQAAVPGLPSRVKCGSPGQLQGHSIFAQDLRLCLDETLSWNCFGISLLAMALGLVVPMLHHLCGWDLWYCFHLCLAWLPHRGQRRGADALFYDAFVVFDKAQSAVADWVYNELRVQLEERRGRRALRLCLEERDWLPGKTLFENLWASVYSSRKTLFVLAHTDRVSGLLRASFLLAQQRLLEDRKDVVVLVILRPDAYRSRYVRLRQRLCRQSVLLWPHQPRGQGSFWAQLGTALTRDNHHFYNRNFCRGPTTAE.

Positions 1–24 (MGPRCTLHPLSLLVQVTALAAALA) are cleaved as a signal peptide. The Extracellular portion of the chain corresponds to 25 to 816 (QGRLPAFLPC…LCLDETLSWN (792 aa)). Cysteine 34 and cysteine 44 are joined by a disulfide. 46–50 (WLFLK) is a DNA binding site. LRR repeat units follow at residues 61–84 (RANV…DFVH), 86–109 (SSLR…HFPC), 121–146 (VPTL…SLVS), 149–165 (LSRT…LTGL), 166–189 (HALR…ALEV), 197–220 (LGNL…LPPS), 222–241 (ETLL…DLAN), 242–267 (LTAL…CREC), 282–305 (LSRL…WFRG), 307–331 (DRLQ…AFQG), 332–355 (LARL…HLHL), 362–385 (LRSL…TLQP), 389–412 (LPML…IFGA), 414–439 (PGLL…TREV), 469–493 (CKAF…MFAR), 495–518 (SRLE…QFVP), 519–542 (LTSL…SFTE), 544–571 (PRLE…SFVA), 573–597 (LPAL…LCSA), 599–621 (LCAL…LYLR), 626–649 (LRSL…ALDN), 651–674 (PKSL…SLTL), 675–698 (LPKL…SLPS), 700–722 (TQLR…FFAL), 723–746 (AKQL…WFGS), and 748–771 (VGNL…TFVG). N-linked (GlcNAc...) asparagine glycosylation occurs at asparagine 63. DNA-binding positions include 71 to 76 (SNRIHH) and 94 to 108 (KWNC…MHFP). A disulfide bridge links cysteine 97 with cysteine 109. A glycan (N-linked (GlcNAc...) asparagine) is linked at asparagine 128. DNA contacts are provided by residues tyrosine 131, arginine 151, and 178–180 (YYK). An intrachain disulfide couples cysteine 177 to cysteine 183. N-linked (GlcNAc...) asparagine glycosylation occurs at asparagine 199. Residue tyrosine 207 coordinates DNA. N-linked (GlcNAc...) asparagine glycosylation is found at asparagine 209 and asparagine 241. 2 disulfide bridges follow: cysteine 254–cysteine 267 and cysteine 257–cysteine 264. The S-palmitoyl cysteine moiety is linked to residue cysteine 257. Residue arginine 261 coordinates DNA. Residue cysteine 264 is the site of S-palmitoyl cysteine attachment. Residue asparagine 339 is glycosylated (N-linked (GlcNAc...) asparagine). Residues cysteine 469 and cysteine 499 are joined by a disulfide bond. N-linked (GlcNAc...) asparagine glycosylation is present at asparagine 512. Asparagine 566 is a glycosylation site (N-linked (GlcNAc...) asparagine). 2 N-linked (GlcNAc...) asparagine glycosylation sites follow: asparagine 668 and asparagine 693. Asparagine 730 is a glycosylation site (N-linked (GlcNAc...) asparagine). Cystine bridges form between cysteine 763–cysteine 789 and cysteine 765–cysteine 808. The chain crosses the membrane as a helical span at residues 817–837 (CFGISLLAMALGLVVPMLHHL). The Cytoplasmic portion of the chain corresponds to 838–1030 (CGWDLWYCFH…NFCRGPTTAE (193 aa)). The region spanning 865–1010 (LFYDAFVVFD…SFWAQLGTAL (146 aa)) is the TIR domain.

The protein belongs to the Toll-like receptor family. Monomer and homodimer. Exists as a monomer in the absence of unmethylated cytidine-phosphate-guanosine (CpG) ligand. Proteolytic processing of an insertion loop (Z-loop) is required for homodimerization upon binding to the unmethylated CpG ligand leading to its activation. Interacts with MYD88 via their respective TIR domains. Interacts with BTK. Interacts (via transmembrane domain) with UNC93B1. Interacts with CD300LH; the interaction may promote full activation of TLR9-triggered innate responses. Interacts with CNPY3 and HSP90B1; this interaction is required for proper folding in the endoplasmic reticulum. Interacts with SMPDL3B. Interacts with CD82; this interaction is essential for TLR9-dependent myddosome formation in response to CpG stimulation. Post-translationally, activated by proteolytic cleavage of the flexible loop between repeats LRR14 and LRR15 within the ectodomain. Cleavage requires UNC93B1. Proteolytically processed by first removing the majority of the ectodomain by either asparagine endopeptidase (AEP) or a cathepsin followed by a trimming event that is solely cathepsin mediated and required for optimal receptor signaling. In terms of processing, palmitoylated by ZDHHC3 in the Golgi regulates TLR9 trafficking from the Golgi to endosomes. Depalmitoylation by PPT1 controls the release of TLR9 from UNC93B1 in endosomes.

Its subcellular location is the endoplasmic reticulum membrane. The protein localises to the endosome. It localises to the lysosome. It is found in the cytoplasmic vesicle. The protein resides in the phagosome. Key component of innate and adaptive immunity. TLRs (Toll-like receptors) control host immune response against pathogens through recognition of molecular patterns specific to microorganisms. TLR9 is a nucleotide-sensing TLR which is activated by unmethylated cytidine-phosphate-guanosine (CpG) dinucleotides. Acts via MYD88 and TRAF6, leading to NF-kappa-B activation, cytokine secretion and the inflammatory response. Upon CpG stimulation, induces B-cell proliferation, activation, survival and antibody production. The protein is Toll-like receptor 9 (TLR9) of Sus scrofa (Pig).